Consider the following 137-residue polypeptide: NADH-quinone oxidoreductase subunit A (137 aa).

3 helical membrane-spanning segments follow: residues W12–S32, F66–W86, and W95–L115.

It belongs to the complex I subunit 3 family. In terms of assembly, NDH-1 is composed of 13 different subunits. Subunits NuoA, H, J, K, L, M, N constitute the membrane sector of the complex.

The protein localises to the cell inner membrane. It carries out the reaction a quinone + NADH + 5 H(+)(in) = a quinol + NAD(+) + 4 H(+)(out). NDH-1 shuttles electrons from NADH, via FMN and iron-sulfur (Fe-S) centers, to quinones in the respiratory chain. The immediate electron acceptor for the enzyme in this species is believed to be ubiquinone. Couples the redox reaction to proton translocation (for every two electrons transferred, four hydrogen ions are translocated across the cytoplasmic membrane), and thus conserves the redox energy in a proton gradient. The protein is NADH-quinone oxidoreductase subunit A of Pseudomonas savastanoi pv. phaseolicola (strain 1448A / Race 6) (Pseudomonas syringae pv. phaseolicola (strain 1448A / Race 6)).